The chain runs to 471 residues: Meiosis-specific with OB domain-containing protein (471 aa).

Residues 167–272 constitute a DNA-binding region (OB); that stretch reads IINVLAAVKS…EANILLNFIR (106 aa).

It belongs to the MEIOB family. In terms of assembly, component of a multiprotein complex with RPA2 and SPATA22. Interacts with SPATA22. Interacts with the complex BRME1:HSF2BP:BRCA2.

It localises to the cytoplasm. It is found in the nucleus. The protein localises to the chromosome. Single-stranded DNA-binding protein required for homologous recombination in meiosis I. Required for double strand breaks (DSBs) repair and crossover formation and promotion of faithful and complete synapsis. Not required for the initial loading of recombinases but required to maintain a proper number of RAD51 and DMC1 foci after the zygotene stage. May act by ensuring the stabilization of recombinases, which is required for successful homology search and meiotic recombination. Displays Single-stranded DNA 3'-5' exonuclease activity in vitro. The polypeptide is Meiosis-specific with OB domain-containing protein (MEIOB) (Macaca fascicularis (Crab-eating macaque)).